The primary structure comprises 620 residues: MIQKEMEIYNLFTFQIDLDKKLLFEKSNDQKNYSKIRTHYFKHKFKNKSAVFLNKNLIKNSLNKVLLNFSDFVSGAGIDTVFNQIIDEDPEVLNYLKQVKKDLSKENNATSQLTFNVTINPKNTLANFFEGFNIYLHFNEENNTVIGSFSLQWHIKKTDLFSETKNIAINNLIHTFCKNNMHEISFMQIINCFSKTKINKHGEIVLKSCAFKQKWQNVVAEKYPFSTASKDLEKINDFFDALFVMLLLVCHLNKNLLWLCEKTDFFEWKPSQKTALFKANDSGAYLARMLLFLNDWYNENQAITTADIENVNEVEDIGKLVEKYSTNQPQKLSLNSTVYVLQTKQKQFFLKNDFFFNNNEAKLFFLITMKPNVFGLDDTAIANNLNLKKISDFFKEIDFNDEDILNDFKQEQEKLLVRRTFNQLLFMNKNTEILSVVNDKQKSVIHNIVWTITYSKAIMLKAFDYSKAFEKNRTSDPSLLRSNLTVINRLRYLSEYFQNASLKYDLLYTKAKQYMQIDKFINDMIRKVNHEDEIFGKFKERIYLSLGIISAVVFGIVEFFNCVWTILTVSQEVVDKSVLDPRNIIFISIGTILVLFLLVTILVFMTRRLYLFEINKKHKN.

4 helical membrane-spanning segments follow: residues 66 to 86 (LLNF…NQII), 238 to 258 (FFDA…NLLW), 546 to 566 (LGII…VWTI), and 584 to 604 (IIFI…ILVF).

Its subcellular location is the cell membrane. This is an uncharacterized protein from Mycoplasma genitalium (strain ATCC 33530 / DSM 19775 / NCTC 10195 / G37) (Mycoplasmoides genitalium).